A 568-amino-acid chain; its full sequence is MATEEMREKSLKREAESLWDIPPESYASKACSCMGTAAQLVMVAVLGSFQFGFNLSALNTSKAFIILDFGWCKDENGGHYSDCDTGLVYGSLINTAVFLGACVGCLLGGRLTDFGRRASLIFTHCVCTLGCILSAAAEGFPTLLIARLVVGVAVGMFTVCVPMYLSEVTPDDRRGYFGTFHQLFITLGIFFGTLLGLAFGNAPAGDEVYEVSTFQQAWWRVMLGLPAVVSLLAIWLLWFVFPFETPQYMVEKKQRAKATALLREIYGRDNVDVEIQRIVTSRYQQKIQRAQQLTVWKAIVHPTYRSVILLACLLSIMQQFTGINVLVANSNNLYSSLKLPQDAVTGLTVGFTALNVFLTVITIPLVDRLGRRTLLLFSEAVMFVAMGIAFVANLVDQSNTAVQWVTVACVYVFIVGFAVGYGPVLWIYIHEIFPPEIKQGAASLASALNWVATVAIVLPSDFLLKQGFSVFVGICTVALAIIFVVTFIFVKETKGLSIEESPYFKGKSRALGSPSAFRMELNSSPSVPLTRGEGAAASAEKGMGLTDAAAMNGGRGVSDDLTKGTEVV.

Over 1-32 (MATEEMREKSLKREAESLWDIPPESYASKACS) the chain is Cytoplasmic. Residues 33–53 (CMGTAAQLVMVAVLGSFQFGF) traverse the membrane as a helical segment. Residues 54-86 (NLSALNTSKAFIILDFGWCKDENGGHYSDCDTG) lie on the Extracellular side of the membrane. C72 and C83 form a disulfide bridge. A helical transmembrane segment spans residues 87-107 (LVYGSLINTAVFLGACVGCLL). The Cytoplasmic segment spans residues 108–119 (GGRLTDFGRRAS). Residues 120 to 140 (LIFTHCVCTLGCILSAAAEGF) form a helical membrane-spanning segment. The Extracellular portion of the chain corresponds to 141-142 (PT). The chain crosses the membrane as a helical span at residues 143 to 163 (LLIARLVVGVAVGMFTVCVPM). The Cytoplasmic segment spans residues 164–182 (YLSEVTPDDRRGYFGTFHQ). Q182 lines the alpha-D-glucose pocket. Residue Q182 participates in beta-D-glucose binding. A helical transmembrane segment spans residues 183–203 (LFITLGIFFGTLLGLAFGNAP). Residues 204–220 (AGDEVYEVSTFQQAWWR) lie on the Extracellular side of the membrane. The chain crosses the membrane as a helical span at residues 221–241 (VMLGLPAVVSLLAIWLLWFVF). At 242 to 306 (PFETPQYMVE…KAIVHPTYRS (65 aa)) the chain is on the cytoplasmic side. The helical transmembrane segment at 307 to 327 (VILLACLLSIMQQFTGINVLV) threads the bilayer. Alpha-D-glucose-binding residues include Q318, Q319, and N324. Q318 is a binding site for beta-D-glucose. N324 is a beta-D-glucose binding site. Residues 328–345 (ANSNNLYSSLKLPQDAVT) lie on the Extracellular side of the membrane. The chain crosses the membrane as a helical span at residues 346–366 (GLTVGFTALNVFLTVITIPLV). N355 is a binding site for beta-D-glucose. Residues 367–374 (DRLGRRTL) are Cytoplasmic-facing. Residues 375-395 (LLFSEAVMFVAMGIAFVANLV) form a helical membrane-spanning segment. Residues 396-406 (DQSNTAVQWVT) lie on the Extracellular side of the membrane. Residues 407 to 427 (VACVYVFIVGFAVGYGPVLWI) form a helical membrane-spanning segment. W426 serves as a coordination point for alpha-D-glucose. At 428–443 (YIHEIFPPEIKQGAAS) the chain is on the cytoplasmic side. The helical transmembrane segment at 444 to 464 (LASALNWVATVAIVLPSDFLL) threads the bilayer. Over 465 to 469 (KQGFS) the chain is Extracellular. A helical transmembrane segment spans residues 470 to 490 (VFVGICTVALAIIFVVTFIFV). Residues 491–568 (KETKGLSIEE…DDLTKGTEVV (78 aa)) lie on the Cytoplasmic side of the membrane.

The protein belongs to the major facilitator superfamily. Sugar transporter (TC 2.A.1.1) family. In terms of assembly, homodimer.

It is found in the cell membrane. The catalysed reaction is D-glucose(out) = D-glucose(in). It carries out the reaction D-fructose(out) = D-fructose(in). The enzyme catalyses D-galactose(in) = D-galactose(out). It catalyses the reaction D-mannose(out) = D-mannose(in). The catalysed reaction is D-glucosamine(out) = D-glucosamine(in). It carries out the reaction D-xylose(out) = D-xylose(in). With respect to regulation, inhibited by cytochalasin B. In terms of biological role, sodium-independent facilitative hexose transporter. Can transport D-glucose and D-mannose with high affinity, and D-fructose and D-galactose with low affinity. Can transport D-xylose and D-glucosamine. This is Hexose transporter 1 from Toxoplasma gondii.